Reading from the N-terminus, the 156-residue chain is Nucleoredoxin-like protein 2 (156 aa).

In terms of domain architecture, Thioredoxin spans 9 to 147 (HLVTCKGATV…LACFQDWVEA (139 aa)).

It belongs to the nucleoredoxin family.

May be involved in the maintenance of both the function and the viability of sensory neurons, including photoreceptors and olfactory neurons. This Homo sapiens (Human) protein is Nucleoredoxin-like protein 2 (NXNL2).